Reading from the N-terminus, the 206-residue chain is uncharacterized protein (206 aa).

Residues lysine 128–arginine 206 are disordered. The segment covering tyrosine 171–isoleucine 181 has biased composition (polar residues).

Its subcellular location is the cytoplasm. It localises to the nucleus. This is an uncharacterized protein from Schizosaccharomyces pombe (strain 972 / ATCC 24843) (Fission yeast).